Reading from the N-terminus, the 374-residue chain is DNA replication and repair protein RecF (374 aa).

34 to 41 is an ATP binding site; that stretch reads GNNGAGKT.

The protein belongs to the RecF family.

It is found in the cytoplasm. Its function is as follows. The RecF protein is involved in DNA metabolism; it is required for DNA replication and normal SOS inducibility. RecF binds preferentially to single-stranded, linear DNA. It also seems to bind ATP. This is DNA replication and repair protein RecF from Rhizobium etli (strain CIAT 652).